A 393-amino-acid polypeptide reads, in one-letter code: Ethanol acetyltransferase 1 (393 aa).

Residues M1–V25 constitute a mitochondrion transit peptide. The 103-residue stretch at P49–E151 folds into the AB hydrolase-1 domain. Residues S122, D146, and H296 each act as charge relay system in the active site. Positions A343–K354 are enriched in basic and acidic residues. The tract at residues A343–A393 is disordered. Positions V355 to T375 are enriched in polar residues. Positions D379–A393 are enriched in basic and acidic residues.

It belongs to the AB hydrolase superfamily.

It localises to the mitochondrion. The catalysed reaction is ethanol + acetyl-CoA = ethyl acetate + CoA. The enzyme catalyses acetyl-CoA + H2O = acetate + CoA + H(+). It carries out the reaction ethyl acetate + H2O = ethanol + acetate + H(+). Alcohol acetyltransferase that catalyzes the synthesis of ethyl acetate from ethanol and acetyl-CoA. Can also function as a thioesterase by hydrolyzing acetyl-CoA in the absence of ethanol, as well as esterase hydrolyzing ethyl acetate. The polypeptide is Ethanol acetyltransferase 1 (EAT1) (Wickerhamomyces ciferrii (strain ATCC 14091 / BCRC 22168 / CBS 111 / JCM 3599 / NBRC 0793 / NRRL Y-1031 F-60-10) (Yeast)).